We begin with the raw amino-acid sequence, 524 residues long: Calcium-dependent protein kinase 1 (524 aa).

Positions 1–34 are disordered; it reads MGCSQSSNVKDFKTRRSKFTNGNNYGKSGNNKNS. Glycine 2 carries the N-myristoyl glycine lipid modification. Cysteine 3 is lipidated: S-palmitoyl cysteine. Positions 10 to 20 match the Basic cluster involved in membrane binding motif; sequence KDFKTRRSKFT. A phosphoserine; by autocatalysis mark is found at serine 17, serine 28, and serine 34. Residues 21 to 32 are compositionally biased toward low complexity; sequence NGNNYGKSGNNK. Positions 56–325 constitute a Protein kinase domain; sequence YFKVRKLGSG…AKEALNSKWI (270 aa). ATP is bound by residues 62–70 and lysine 85; that span reads LGSGAYGEV. Position 64 is a phosphoserine; by PKG; by autocatalysis (serine 64). Threonine 100 is subject to Phosphothreonine; by autocatalysis. At serine 118 the chain carries Phosphoserine; by autocatalysis. Aspartate 191 functions as the Proton acceptor in the catalytic mechanism. At serine 217 the chain carries Phosphoserine. Serine 220 is subject to Phosphoserine; by autocatalysis. A Phosphothreonine; by PKG; by autocatalysis modification is found at threonine 231. The residue at position 335 (serine 335) is a Phosphoserine; by autocatalysis. Residues 346–353 carry the J domain autoinhibitory motif motif; it reads NMRKFEGS. The interval 346–364 is j domain; the sequence is NMRKFEGSQKLAQAAILFI. The J domain interacts with the EF-hand domains motif lies at 354-364; the sequence is QKLAQAAILFI. EF-hand domains lie at 372-407, 416-451, 452-487, and 488-521; these read EERK…LRSF, NVEE…KQIL, FSEE…TSIS, and EQMW…ICDN. 20 residues coordinate Ca(2+): aspartate 385, asparagine 387, aspartate 389, glutamine 391, glutamate 396, aspartate 429, aspartate 431, asparagine 433, tyrosine 435, glutamate 440, aspartate 465, aspartate 467, serine 469, lysine 471, glutamate 476, aspartate 499, asparagine 501, aspartate 503, methionine 505, and glutamate 510.

Belongs to the protein kinase superfamily. Ser/Thr protein kinase family. CDPK subfamily. Monomer. Forms a high molecular weight (250 and 400 kDa) complex. Forms a complex composed of CDPK1, PKA regulatory subunit PKAr and 14-3-3I; the complex is formed in merozoites in response to low extracellular level of K(+) and may play a role in microneme secretion. Interacts (when phosphorylated) with 14-3-3I in a Ca(2+)-independent manner; the interaction does not regulate CDPK1 catalytic activity but is required for merozoite invasion of host erythrocytes. Interacts with PKA regulatory subunit PKAr; in a Ca(2+)-dependent manner. Interacts with SERA5 p50 in the late schizont stage. Interacts with inner membrane complex protein IMC1g in late schizonts. Interacts with rhoptry protein RhopH3 in merozoites. It depends on Mg(2+) as a cofactor. In terms of processing, myristoylated. Myristoylation, palmitoylation and the basic cluster motif are required for the localization to the parasitophorous vacuole membrane. Palmitoylated. Palmitoylation increases in merozoites in response to low level of extracellular K(+) in the host blood. Myristoylation, palmitoylation and the basic cluster motif are required for the localization to the parasitophorous vacuole membrane. Post-translationally, phosphorylation at Ser-64 occurs at late schizont stage and regulates CDPK1 protein-protein interaction. Phosphorylated at Ser-28, Ser-34 and Ser-64 in merozoites in response to low extracellular level of K(+). Phosphorylation at Thr-231 may regulate CDPK1 kinase activity. Phosphorylation increases in response to an increase in intracellular Ca(2+) levels. Autophosphorylated in vitro. Autophosphorylation does not affect membrane localization in vitro.

The protein localises to the membrane. It is found in the cell membrane. Its subcellular location is the parasitophorous vacuole membrane. It localises to the cytoplasm. The protein resides in the cell projection. The protein localises to the cilium. It is found in the flagellum. Its subcellular location is the host cell membrane. The catalysed reaction is L-seryl-[protein] + ATP = O-phospho-L-seryl-[protein] + ADP + H(+). The enzyme catalyses L-threonyl-[protein] + ATP = O-phospho-L-threonyl-[protein] + ADP + H(+). Its activity is regulated as follows. Activated by calcium. Upon calcium binding to the EF-hand domains, the C-terminus of the junction domain (J domain) undergoes a conformational change which results in the dissociation of the pseudo-substrate inhibitory motif from the catalytic domain. This, in turn may facilitate the autophosphorylation of the activation loop at Thr-231, which leads to the kinase activation. May be negatively regulated by PKA-mediated phosphorylation. Inhibited by purfalcamine. Functionally, calcium-dependent protein kinase which acts as a sensor and effector of intracellular Ca(2+) levels probably in part downstream of cGMP-activated PKG kinase. By phosphorylating various proteins, required for microneme secretion and thus merozoite egress from and invasion of host erythrocytes. During gametogenesis, essential for the development of both male and female gametes. Phosphorylates SERA5 p50 which enhances SERA5 p50 protease activity; however, SERA5 p50 protease activity has been shown in other studies to be controversial. Probably by phosphorylating SERA5 p50, plays a role in merozoite egress from host erythrocytes. Probably prior or during merozoite invasion of host erythrocytes, phosphorylates rhoptry protein RhopH3 which is required for RhopH3 localization to rhoptries and for its secretion. Probably in late schizonts, phosphorylates myosin A tail domain-interacting protein MTIP and glideosome-associated protein 45 GAP45, both of which are components of the motor complex that generates the force required by the parasite to invade host cells. In late schizonts, phosphorylates inner membrane complex protein IMC1g. In late schizonts, phosphorylates PKA regulatory subunit PKAr in a calcium-dependent manner, which may contribute to the dissociation of regulatory PKAr and catalytic PKAc subunits and promote the activation of PKAc. May phosphorylate raf kinase inhibitory protein RKIP which in turn may regulate CDPK1 catalytic activity. May phosphorylate proteins of the host erythrocyte membranes. In Plasmodium falciparum (isolate 3D7), this protein is Calcium-dependent protein kinase 1.